The sequence spans 218 residues: tRNA (guanine-N(7)-)-methyltransferase (218 aa).

Positions 1–25 (MRLKNKPWANELVEEHPESALDRPN) are disordered. The span at 13–25 (VEEHPESALDRPN) shows a compositional bias: basic and acidic residues. 4 residues coordinate S-adenosyl-L-methionine: E45, E70, D97, and D119. D119 is a catalytic residue. Residue K123 participates in substrate binding. Residues 125–130 (RHEKRR) form an interaction with RNA region. Substrate contacts are provided by residues D155 and 195–198 (TEYE).

It belongs to the class I-like SAM-binding methyltransferase superfamily. TrmB family.

The enzyme catalyses guanosine(46) in tRNA + S-adenosyl-L-methionine = N(7)-methylguanosine(46) in tRNA + S-adenosyl-L-homocysteine. It functions in the pathway tRNA modification; N(7)-methylguanine-tRNA biosynthesis. In terms of biological role, catalyzes the formation of N(7)-methylguanine at position 46 (m7G46) in tRNA. This is tRNA (guanine-N(7)-)-methyltransferase from Lactobacillus delbrueckii subsp. bulgaricus (strain ATCC BAA-365 / Lb-18).